A 328-amino-acid polypeptide reads, in one-letter code: MSFVLILSLVFGGCCSNVISFEHMVQGSNINLGNIVTFTQFVSVTLIQLPNALDFSHFPFRLRPRHIPLKIHMLAVFLFFTSSVANNSVFKFDISVPIHIIIRCSGTTLTMIIGWAVCNKRYSKLQVQSAIIMTLGAIVASLYRDKEFSMDSLKLNTDSVGMTQKSMFGIFVVLVATALMSLLSLLNEWTYNKCGKHWKETLFYSHFLALPLFMLGYTRLRDEFRDLLISSDSMDIPIVKLPIATKLFMLIANNVTQFICIKGVNMLASNTDALTLSVVLLVRKFVSLLLSVYIYKNVLSVTAYLGTITVFLGAGLYSYGSVKTALPR.

A run of 10 helical transmembrane segments spans residues 1–21, 30–50, 66–86, 98–118, 122–142, 166–186, 198–218, 241–261, 274–294, and 298–318; these read MSFVLILSLVFGGCCSNVISF, INLGNIVTFTQFVSVTLIQLP, HIPLKIHMLAVFLFFTSSVAN, IHIIIRCSGTTLTMIIGWAVC, YSKLQVQSAIIMTLGAIVASL, SMFGIFVVLVATALMSLLSLL, WKETLFYSHFLALPLFMLGYT, LPIATKLFMLIANNVTQFICI, LTLSVVLLVRKFVSLLLSVYI, and VLSVTAYLGTITVFLGAGLYS.

This sequence belongs to the nucleotide-sugar transporter family. SLC35A subfamily.

Its subcellular location is the golgi apparatus membrane. Functionally, sugar transporter that specifically mediates the transport of UDP-N-acetylglucosamine (UDP-GlcNAc) from the cytosol into Golgi vesicles where glycosyltransferases function. This Kluyveromyces lactis (strain ATCC 8585 / CBS 2359 / DSM 70799 / NBRC 1267 / NRRL Y-1140 / WM37) (Yeast) protein is UDP-N-acetylglucosamine transporter YEA4 (YEA4).